The sequence spans 1264 residues: BRCA2-interacting transcriptional repressor EMSY (1264 aa).

Residues Met1–Pro442 are interaction with BRCA2. Residues Cys16–Val114 form the ENT domain. The interval Pro118–Pro122 is interaction with ZMYND11. The tract at residues Pro145–Val179 is disordered. Position 171 is a phosphothreonine (Thr171). 2 positions are modified to phosphoserine: Ser173 and Ser177. 2 O-linked (GlcNAc) serine glycosylation sites follow: Ser192 and Ser200. Phosphoserine is present on Ser202. Thr235 carries an O-linked (GlcNAc) threonine glycan. Low complexity predominate over residues Phe364–Pro406. The interval Phe364–Gly407 is disordered. O-linked (GlcNAc) threonine glycosylation is found at Thr465 and Thr470. Residue Ser521 is glycosylated (O-linked (GlcNAc) serine). The segment covering Ser660–Gln671 has biased composition (polar residues). A disordered region spans residues Ser660–Val700. A compositionally biased stretch (low complexity) spans Thr681–Gln698. Phosphoserine occurs at positions 782 and 785. A glycan (O-linked (GlcNAc) threonine) is linked at Thr1069. Residue Ser1085 is modified to Phosphoserine. Positions Gln1232–Ser1264 are disordered. Over residues Leu1233–Thr1252 the composition is skewed to acidic residues. The span at Pro1254–Ser1264 shows a compositional bias: polar residues.

As to quaternary structure, homodimer. Interacts with the transactivation domain of BRCA2. Interacts with CBX1 (via chromoshadow domain). Interacts with ZMYND11. Does not interact with CBX3 or CBX5. Component of a nuclear receptor-mediated transcription complex composed of at least ZNF335, CCAR2 and EMSY; the complex stimulates the transcription of nuclear receptor target genes such as SOX9 and HOXA1. Within the complex interacts with CCAR2 and ZNF335. Components of this complex may associate with components of a histone methylation complex to form a complex at least composed of ZNF335, HCFC1, CCAR2, EMSY, MKI67, RBBP5, ASH2L and WDR5. Within this complex, interacts with ASH2L and RBBP5.

The protein resides in the nucleus. In terms of biological role, regulator which is able to repress transcription, possibly via its interaction with a multiprotein chromatin remodeling complex that modifies the chromatin. Its interaction with BRCA2 suggests that it may play a central role in the DNA repair function of BRCA2. Mediates ligand-dependent transcriptional activation by nuclear hormone receptors. This Mus musculus (Mouse) protein is BRCA2-interacting transcriptional repressor EMSY.